Here is a 321-residue protein sequence, read N- to C-terminus: Glucokinase (321 aa).

8 to 13 lines the ATP pocket; that stretch reads GDVGGT.

Belongs to the bacterial glucokinase family.

It localises to the cytoplasm. It carries out the reaction D-glucose + ATP = D-glucose 6-phosphate + ADP + H(+). The polypeptide is Glucokinase (Klebsiella pneumoniae subsp. pneumoniae (strain ATCC 700721 / MGH 78578)).